A 172-amino-acid chain; its full sequence is FMN reductase (NADH) RutF 2 (172 aa).

Belongs to the non-flavoprotein flavin reductase family. RutF subfamily.

The catalysed reaction is FMNH2 + NAD(+) = FMN + NADH + 2 H(+). Its function is as follows. Catalyzes the reduction of FMN to FMNH2 which is used to reduce pyrimidine by RutA via the Rut pathway. The protein is FMN reductase (NADH) RutF 2 of Methylorubrum extorquens (strain PA1) (Methylobacterium extorquens).